The following is a 311-amino-acid chain: Probable cell division protein WhiA (311 aa).

The H-T-H motif DNA-binding region spans 274-308 (SLKELGEMIPSGAISKSGINHRIRKINEFAEKLRE).

Belongs to the WhiA family.

In terms of biological role, involved in cell division and chromosome segregation. The polypeptide is Probable cell division protein WhiA (Enterococcus faecalis (strain ATCC 700802 / V583)).